Consider the following 499-residue polypeptide: Glutamyl-tRNA(Gln) amidotransferase subunit A (499 aa).

Active-site charge relay system residues include lysine 79 and serine 154. Serine 178 (acyl-ester intermediate) is an active-site residue.

The protein belongs to the amidase family. GatA subfamily. In terms of assembly, heterotrimer of A, B and C subunits.

The enzyme catalyses L-glutamyl-tRNA(Gln) + L-glutamine + ATP + H2O = L-glutaminyl-tRNA(Gln) + L-glutamate + ADP + phosphate + H(+). Functionally, allows the formation of correctly charged Gln-tRNA(Gln) through the transamidation of misacylated Glu-tRNA(Gln) in organisms which lack glutaminyl-tRNA synthetase. The reaction takes place in the presence of glutamine and ATP through an activated gamma-phospho-Glu-tRNA(Gln). The polypeptide is Glutamyl-tRNA(Gln) amidotransferase subunit A (Psychrobacter sp. (strain PRwf-1)).